The chain runs to 338 residues: Phenylalanine--tRNA ligase alpha subunit (338 aa).

E252 contributes to the Mg(2+) binding site.

This sequence belongs to the class-II aminoacyl-tRNA synthetase family. Phe-tRNA synthetase alpha subunit type 1 subfamily. In terms of assembly, tetramer of two alpha and two beta subunits. Requires Mg(2+) as cofactor.

Its subcellular location is the cytoplasm. It carries out the reaction tRNA(Phe) + L-phenylalanine + ATP = L-phenylalanyl-tRNA(Phe) + AMP + diphosphate + H(+). This chain is Phenylalanine--tRNA ligase alpha subunit, found in Mycoplasmoides gallisepticum (strain R(low / passage 15 / clone 2)) (Mycoplasma gallisepticum).